Reading from the N-terminus, the 258-residue chain is MRAKVRAALDALYMKRLVRELEGRPRPQHIGIMLDGNRRWAKMSGIDDPREGYRAGGAKVLDFLRWCDSAQIEHVTLFMLSDDNLARPEEQLNPLIDIIAEVVEQLAAPGNPWPVEAVGALDLLPAESASRLKTATAATQGRKGGTKVDVAVGYGGRREIVDAVRSALTEHSSQGGDIDEFIETFTMEHISKHLYSKTRSESDLIIRTSGEQRLSGFLLWQSAYAEVHFCETYWPDFREIDFLRALRSYSLRERRYGR.

The active site involves aspartate 35. Aspartate 35 contributes to the Mg(2+) binding site. Substrate is bound by residues 36–39 (GNRR), tryptophan 40, arginine 50, and 81–83 (SDD). Residue asparagine 84 is the Proton acceptor of the active site. Substrate is bound by residues arginine 87, arginine 207, and 213–215 (RLS). Glutamate 226 is a Mg(2+) binding site.

It belongs to the UPP synthase family. Homodimer. Mg(2+) serves as cofactor.

In terms of biological role, catalyzes the condensation of isopentenyl diphosphate (IPP) with allylic pyrophosphates generating different type of terpenoids. The protein is Isoprenyl transferase 2 of Streptomyces coelicolor (strain ATCC BAA-471 / A3(2) / M145).